Consider the following 458-residue polypeptide: Monomethylamine methyltransferase MtmB (458 aa).

Residue pyrrolysine 202 is a non-standard amino acid, pyrrolysine.

It belongs to the monomethylamine methyltransferase family. As to quaternary structure, can form a complex with MtmC.

The enzyme catalyses Co(I)-[methylamine-specific corrinoid protein] + methylamine + H(+) = methyl-Co(III)-[methylamine-specific corrinoid protein] + NH4(+). Its pathway is one-carbon metabolism; methanogenesis from methylamine. Its function is as follows. Catalyzes the transfer of the methyl group from monomethylamine to the corrinoid cofactor of MtmC. In Methanosarcina mazei (strain ATCC BAA-159 / DSM 3647 / Goe1 / Go1 / JCM 11833 / OCM 88) (Methanosarcina frisia), this protein is Monomethylamine methyltransferase MtmB (mtmB1).